The primary structure comprises 733 residues: MNPTVELRDIEALVTNLHADPFAILGPHRAEDGGAWVVRTYQPGASRVVLLGESGELAMENRRHPDLFECAVPTAPGAYRLRVEDAWGERLIEDAYRFRGSLLSDLDGHLFAEGNHHRIYEKLGAHPAVFEGVAGVYFAVWAPSARNVSVLGDFNRWDGRFHQMRRVERSTGIWELFIPELGEGTVYKFEIKNGFGHIYEKSDPYAFQQELRPKSGSVVADLDRYSWNDGEWLKRRALSNPLKQPLAIYEVHLGSWMRVPEEGDRFLSYTELADKLIPYVKDLGFTHIELLPILEHPFDGSWGYQVLGYYAPTSRFGNPTEFMAFVDRCHQSGIGVILDWVPAHFPKDGHGLALFDGTHLYEHADSRQGEHKEWGTLVFNYGRNEVRNFLIANALFWFERYHIDGIRVDAVAAMLYLDYSRHDGEWVANRYGGRENLEAIGFLRQLNELIFLYYPGALSIAEESTAWPLVTRPPYLGGLGFNLKWHMGWMHDTLAYFRTDPLFRRYRHNDITFSITYTFYENFVLALSHDEVVHMKGSIIGKMPGDGWQKFANLRALFTFMYGHPGKKTLFMGMEFAHGREWNAYQSLDWHLLDYPQHRQMQQFVRALNRLYTGQPALYEEDCNPAGFFWVDCHDVLNSVFTFVRRGKDPSEQLLFVCNFTPTYHPHYRVGVLETGFWQEIFNSDSGIYGGSNKGNLGGLWSENWAIHGQPYSLGLQLPPLGCLVFKRRKEQD.

Asp409 functions as the Nucleophile in the catalytic mechanism. Glu462 functions as the Proton donor in the catalytic mechanism.

The protein belongs to the glycosyl hydrolase 13 family. GlgB subfamily. As to quaternary structure, monomer.

The enzyme catalyses Transfers a segment of a (1-&gt;4)-alpha-D-glucan chain to a primary hydroxy group in a similar glucan chain.. It participates in glycan biosynthesis; glycogen biosynthesis. In terms of biological role, catalyzes the formation of the alpha-1,6-glucosidic linkages in glycogen by scission of a 1,4-alpha-linked oligosaccharide from growing alpha-1,4-glucan chains and the subsequent attachment of the oligosaccharide to the alpha-1,6 position. This Gloeobacter violaceus (strain ATCC 29082 / PCC 7421) protein is 1,4-alpha-glucan branching enzyme GlgB.